Here is an 89-residue protein sequence, read N- to C-terminus: Meiosis expressed gene 1 protein homolog (89 aa).

Belongs to the MEIG1 family.

This Nematostella vectensis (Starlet sea anemone) protein is Meiosis expressed gene 1 protein homolog.